The primary structure comprises 447 residues: N-succinylarginine dihydrolase (447 aa).

Substrate contacts are provided by residues 19-28 (AGLSFGNEAS), Asn-110, and 137-138 (HR). Glu-174 is an active-site residue. Position 212 (Arg-212) interacts with substrate. His-248 is an active-site residue. Asp-250 and Asn-359 together coordinate substrate. Cys-365 functions as the Nucleophile in the catalytic mechanism.

This sequence belongs to the succinylarginine dihydrolase family. In terms of assembly, homodimer.

It catalyses the reaction N(2)-succinyl-L-arginine + 2 H2O + 2 H(+) = N(2)-succinyl-L-ornithine + 2 NH4(+) + CO2. It participates in amino-acid degradation; L-arginine degradation via AST pathway; L-glutamate and succinate from L-arginine: step 2/5. Functionally, catalyzes the hydrolysis of N(2)-succinylarginine into N(2)-succinylornithine, ammonia and CO(2). The protein is N-succinylarginine dihydrolase of Salmonella typhimurium (strain LT2 / SGSC1412 / ATCC 700720).